Consider the following 476-residue polypeptide: Chromosomal replication initiator protein DnaA (476 aa).

A domain I, interacts with DnaA modulators region spans residues 1-87 (MSESSHVGLW…LMYNVLVDKS (87 aa)). Residues 87–130 (SSGATVNQESTTRSTAIPQSGLPRVDERKAPGLLRAPAVQDLDP) form a domain II region. Residues 131–348 (HLNPNYNFET…GIVISIMAHS (218 aa)) form a domain III, AAA+ region region. ATP is bound by residues Gly176, Gly178, Lys179, and Thr180. The segment at 349–476 (TIYNKEIDLD…KKRNVSNGER (128 aa)) is domain IV, binds dsDNA.

The protein belongs to the DnaA family. In terms of assembly, oligomerizes as a right-handed, spiral filament on DNA at oriC.

It localises to the cytoplasm. Plays an essential role in the initiation and regulation of chromosomal replication. ATP-DnaA binds to the origin of replication (oriC) to initiate formation of the DNA replication initiation complex once per cell cycle. Binds the DnaA box (a 9 base pair repeat at the origin) and separates the double-stranded (ds)DNA. Forms a right-handed helical filament on oriC DNA; dsDNA binds to the exterior of the filament while single-stranded (ss)DNA is stabiized in the filament's interior. The ATP-DnaA-oriC complex binds and stabilizes one strand of the AT-rich DNA unwinding element (DUE), permitting loading of DNA polymerase. After initiation quickly degrades to an ADP-DnaA complex that is not apt for DNA replication. Binds acidic phospholipids. In Bacteroides fragilis (strain YCH46), this protein is Chromosomal replication initiator protein DnaA.